We begin with the raw amino-acid sequence, 638 residues long: MMGIQILPPQLANQIAAGEVVERPASVVKELVENSLDAGASRVDIEIDKGGSKLIKIRDNGSGIPKDELALALSRHATSKLHTLDDLEAILSFGFRGEALASISSVSRLTLTSRTADQTEAWQAHAEGADMAVKVMPAAHPVGSTIEVVDLFFNTPARRRFLKSDKTEFTHIDEWLKRIALVRGDIHLTLTHNGKTVRNYRPAMNEAQYLQRLTQVSGRPFAEQALKIECQHDDLRLSGYLQSPWSPVISDTHYFYVNGRLIRDRLVNHAVRQAFAQKAELEQPGYVLMLDIDPHQVDVNVHPAKHEVRFHQSRYVHDYILQALQSALEEAGELNFVHSSSLDEVEDVFVDAPTSATEISAPFVLGADSAQVNVPADTLESAQPLVASAVQVKSAGAGREGASFGTQTNAFGSMATPRDNSRGNYSAGESRQRTELPSKAAIASYGALLQTPSYSVKDQDYQPSLPMPAILDGQYWVMATADKLSLLPIKSVALATRCQEIEAKLATGLIGQPLLMPVSVAADADWQAVLDEHDTLIRQLGLELTIRYQQLIIKKVPPYIRESQLAKVIPEWLQSLRFETPAPSALAFWLAKHSLTGFVSAPEIWAAFSQLAEEKKQLIANKAILLPWQSWLEEQASE.

Residues 404-433 are disordered; that stretch reads FGTQTNAFGSMATPRDNSRGNYSAGESRQR.

Belongs to the DNA mismatch repair MutL/HexB family.

This protein is involved in the repair of mismatches in DNA. It is required for dam-dependent methyl-directed DNA mismatch repair. May act as a 'molecular matchmaker', a protein that promotes the formation of a stable complex between two or more DNA-binding proteins in an ATP-dependent manner without itself being part of a final effector complex. This chain is DNA mismatch repair protein MutL, found in Shewanella baltica (strain OS195).